The sequence spans 536 residues: MVSIKRYEIISFVIAAFFFLSGLSMWIAFWPIFNSELRSNYKLGANDDGSLHYAAFLYANPPMKNVMKFNLFNVTNPDEVKYLGAKPELIEVGGYAFLESEQKKYYEFSSDKTKMFYQNYKQYHYSEVDNDAGYNYNDKIMFPNSIAEGAVSTVFGPQSEFSPTAKILVSIGLVMLGEYPFISKTVKDVLMDGYEDPLLSVAHSGIFISLVNFYGYGSQLNYIPEMKTFAYLSGYNNSYDENYWINTGYNDFNKLGFVESWAGLEQLPASFWPTLEARQIKGPDSGSLSKIHLTKTDELPFFLSFMCRSFKRTYWQDGLVDGIKTMAFAVPYEEFDTTLEKNAGFRYKNQENVDYFPDWCDKNTTTSLSQCQKTANGTFLLPPGIFPLVCYPGHNAQPPFTVLVSPPHFLYSPPEVQHHLSGMNPDPEKHKPMVFHQEKTSGTALQVDVRFQVNLPVVNNKGSIMSSQMPNVIIPLFYEDSHALVKDFVMDTVWLGVIIVPRIIEYLKFVLIFISICILTTLLVIRVRVKGTVSVV.

Over 1-8 (MVSIKRYE) the chain is Cytoplasmic. A helical transmembrane segment spans residues 9–29 (IISFVIAAFFFLSGLSMWIAF). The Extracellular segment spans residues 30 to 502 (WPIFNSELRS…VWLGVIIVPR (473 aa)). Residues N73, N236, N363, and N376 are each glycosylated (N-linked (GlcNAc...) asparagine). A helical transmembrane segment spans residues 503 to 523 (IIEYLKFVLIFISICILTTLL). Residues 524-536 (VIRVRVKGTVSVV) are Cytoplasmic-facing.

It belongs to the CD36 family.

It localises to the membrane. This is an uncharacterized protein from Caenorhabditis elegans.